The primary structure comprises 613 residues: Ectonucleoside triphosphate diphosphohydrolase 4 (613 aa).

The Cytoplasmic segment spans residues methionine 1–glutamine 33. Residues isoleucine 34 to isoleucine 54 traverse the membrane as a helical segment. Topologically, residues arginine 55 to serine 559 are lumenal. Glutamate 222 serves as the catalytic Proton acceptor. Cysteine 368 and cysteine 395 form a disulfide bridge. Asparagine 404 and asparagine 407 each carry an N-linked (GlcNAc...) asparagine glycan. Cysteines 461 and 490 form a disulfide. The helical transmembrane segment at phenylalanine 560–leucine 580 threads the bilayer. Residues tyrosine 581 to leucine 613 are Cytoplasmic-facing.

This sequence belongs to the GDA1/CD39 NTPase family. Ca(2+) is required as a cofactor. It depends on Mg(2+) as a cofactor. Ubiquitous.

The protein resides in the cytoplasmic vesicle. The protein localises to the autophagosome membrane. Its subcellular location is the lysosome membrane. It is found in the golgi apparatus membrane. The enzyme catalyses a ribonucleoside 5'-triphosphate + H2O = a ribonucleoside 5'-diphosphate + phosphate + H(+). It catalyses the reaction a ribonucleoside 5'-diphosphate + H2O = a ribonucleoside 5'-phosphate + phosphate + H(+). It carries out the reaction UDP + H2O = UMP + phosphate + H(+). The catalysed reaction is UTP + H2O = UDP + phosphate + H(+). The enzyme catalyses CTP + H2O = CDP + phosphate + H(+). It catalyses the reaction GDP + H2O = GMP + phosphate + H(+). It carries out the reaction 5-methyl-UTP + H2O = 5-methyl-UDP + phosphate + H(+). In terms of biological role, catalyzes the hydrolysis of nucleoside triphosphates and diphosphates in a calcium- or magnesium-dependent manner, with a preference for pyrimidines. Preferentially hydrolyzes UTP and TTP on UTP and TTP. AMP, ADP, ATP and UMP are not substrates. Preferentially activated by Ca(2+) over Mg(2+). Functionally, has a broad substrate specificity with the ability of cleaving all nucleotide di- and triphosphates with the exception of adenosine di- and triphosphate (ADP and ATP). Preferentially hydrolyzes CTP, UDP, CDP, GTP and GDP. Can use either Ca(2+) or Mg(2+) equally. The chain is Ectonucleoside triphosphate diphosphohydrolase 4 (Entpd4) from Mus musculus (Mouse).